Consider the following 1388-residue polypeptide: DNA-directed RNA polymerase subunit beta (1388 aa).

Belongs to the RNA polymerase beta chain family. In terms of assembly, the RNAP catalytic core consists of 2 alpha, 1 beta, 1 beta' and 1 omega subunit. When a sigma factor is associated with the core the holoenzyme is formed, which can initiate transcription.

It catalyses the reaction RNA(n) + a ribonucleoside 5'-triphosphate = RNA(n+1) + diphosphate. Functionally, DNA-dependent RNA polymerase catalyzes the transcription of DNA into RNA using the four ribonucleoside triphosphates as substrates. The chain is DNA-directed RNA polymerase subunit beta from Xylella fastidiosa (strain 9a5c).